Here is a 506-residue protein sequence, read N- to C-terminus: Cysteine--tRNA ligase (506 aa).

Cys-34 is a binding site for Zn(2+). Positions 36 to 46 match the 'HIGH' region motif; the sequence is PTVYDFAHIGN. The Zn(2+) site is built by Cys-230, His-269, and Glu-273. The 'KMSKS' region motif lies at 302 to 306; it reads KMSKS. Lys-305 is an ATP binding site.

It belongs to the class-I aminoacyl-tRNA synthetase family. Monomer. The cofactor is Zn(2+).

The protein resides in the cytoplasm. It carries out the reaction tRNA(Cys) + L-cysteine + ATP = L-cysteinyl-tRNA(Cys) + AMP + diphosphate. This is Cysteine--tRNA ligase from Brucella suis biovar 1 (strain 1330).